Reading from the N-terminus, the 700-residue chain is Autophagy-related protein 13 (700 aa).

The interval 319–352 (GSINSSSSPPPGATQSNQSVSSFSTSKPIPVTLN) is disordered. The span at 332–344 (TQSNQSVSSFSTS) shows a compositional bias: low complexity. Residues 399–407 (SSFGSRFRT) form an ATG17-binding region. Positions 428 to 487 (TPNNPILHNFRSRNKSPSVSSTELGPSSSIYMDDDLDSFMKMLDSKPDLRFPSNSPSVYE) are ATG1-binding. Polar residues predominate over residues 506-532 (EQQQHGSPSSNQIMIHSQSQTSQSQVF). Disordered stretches follow at residues 506–562 (EQQQ…PGVS), 576–637 (HASS…NPEL), and 649–700 (ESDD…NQEF). Residues 595-631 (SSPPASATAVATVHNSLRRLTSSSQRTNTNSTNSSTR) show a composition bias toward low complexity. Over residues 656 to 667 (DEHSPRSTDTKS) the composition is skewed to basic and acidic residues.

It belongs to the ATG13 family. Fungi subfamily. As to quaternary structure, hypophosphorylated form interacts with ATG1 to form the ATG1-ATG13 kinase complex. The ATG1-ATG13 complex interacts with the ATG17-ATG29-ATG31 complex through direct interaction with ATG17. Interacts with VAC8.

It is found in the cytoplasm. Its subcellular location is the preautophagosomal structure. Its function is as follows. Activates the ATG1 kinase in a nutritional condition dependent manner through the TOR pathway, leading to autophagy. Involved in ATG9 and ATG23 cycling through the pre-autophagosomal structure. Also involved in cytoplasm to vacuole transport (Cvt) and more specifically in Cvt vesicle formation. Seems to play a role in the switching machinery regulating the conversion between the Cvt pathway and autophagy. Finally, ATG13 is also required for glycogen storage during stationary phase. Functionally, acts as a negative regulator of xylose alcoholic fermentation, a role that is not related to autophagy. The sequence is that of Autophagy-related protein 13 from Ogataea parapolymorpha (strain ATCC 26012 / BCRC 20466 / JCM 22074 / NRRL Y-7560 / DL-1) (Yeast).